A 421-amino-acid polypeptide reads, in one-letter code: MDKLLIRGGRSLKGEVLISGAKNATLPELCACLLTSAPVTLTNVPRLQDVATMLKLIRNMGVAAERSDDGRVTVDASALSSPEAPYELVKTMRASVLALGPLLTRFGEATVSLPGGCAIGSRPVDQHIKGLTAMGAEIVVEHGYMIAKLPKGWTRLKGARIATDMVTVTGTENFLMAATLAEGVTILENAAQEPEITDLAEMLIKMGANIEGHGSSRIRIQGVESLHGCTHQVVADRIETGTFMCAVAATGGDVLLKHGRIDHLEAVVEKLRDAGATVARVEGGIRVQSQGRLKSQSFRTTEYPGFPTDMQAQFMALNCISHGTAVVTETIFENRFMHVNEMVRLGANIQIDSKVAVVEGVEKLSGATVMATDLRASASLVIAGLVADGETVVERIYHLDRGYDQMEAKLRGLGADIERIK.

22–23 is a binding site for phosphoenolpyruvate; it reads KN. Arg93 lines the UDP-N-acetyl-alpha-D-glucosamine pocket. The active-site Proton donor is the Cys117. Cys117 is subject to 2-(S-cysteinyl)pyruvic acid O-phosphothioketal. UDP-N-acetyl-alpha-D-glucosamine-binding positions include 122 to 126, Asp309, and Ile331; that span reads RPVDQ.

It belongs to the EPSP synthase family. MurA subfamily.

Its subcellular location is the cytoplasm. It carries out the reaction phosphoenolpyruvate + UDP-N-acetyl-alpha-D-glucosamine = UDP-N-acetyl-3-O-(1-carboxyvinyl)-alpha-D-glucosamine + phosphate. The protein operates within cell wall biogenesis; peptidoglycan biosynthesis. In terms of biological role, cell wall formation. Adds enolpyruvyl to UDP-N-acetylglucosamine. This chain is UDP-N-acetylglucosamine 1-carboxyvinyltransferase, found in Albidiferax ferrireducens (strain ATCC BAA-621 / DSM 15236 / T118) (Rhodoferax ferrireducens).